The sequence spans 322 residues: Digestive cysteine proteinase 1 (322 aa).

An N-terminal signal peptide occupies residues 1-16; the sequence is MKVVALFLFGLALAAA. Residues 17–105 constitute a propeptide, activation peptide; it reads NPSWEEFKGK…VFTSTDAAPE (89 aa). 3 disulfide bridges follow: Cys-126-Cys-170, Cys-160-Cys-203, and Cys-262-Cys-311. The active site involves Cys-129. Catalysis depends on residues His-269 and Asn-289.

This sequence belongs to the peptidase C1 family.

Its activity is regulated as follows. Inhibited by E-64, antipain, leupeptin, heavy metal ions, iodoacetic acid, dithionitrobenzene, p-hydroxymercuri-benzoate; activated by mercaptoethanol and dithiothreitol. The polypeptide is Digestive cysteine proteinase 1 (LCP1) (Homarus americanus (American lobster)).